The primary structure comprises 545 residues: MTKFIFVTGGVVSSIGKGIVAASLGRLLKSRGYSVSILKLDPYINIDPGTMSPFQHGEVFVTQDGAETDLDLGHYERFTDTSMSRLNCVTTGSIYQAVINKERRGDYNGGTVQVIPHITNEIKERILRVAKSTNPSVVITEIGGTVGDIESLPFLEAIRQFRKEVGRQHVLYMHVTLVPWIASAGEMKTKPTQHSVKELRSIGIQPDILVCRSDRPLPKGLKQKLSGFCDVPEECVITSQDAKSIYEVPLNLEREGMAEQVLNLLQMEQRQPDLTQWQTLVQRLHTPKHELEIAIVGKYVQLSDAYLSVVEALNHAAISTYGKLRLRWVNSEDLENESAETHLGGVDGVVVPGGFGVRGVDGKIAAIKYARDRQIPFLGLCLGMQCSVIEWARNIGGLTDANSAEFDPHTTNPVINLLPGQQEVVDLGGTMRLGLYPCRVLPDTLAFKLYQEDVIYERHRHRYEFNNAYRDLLLKSGYAISGTSPDGQLVEIVELPKHPFFLACQFHPEFQSRPSSPHPLFKGFIQAAIALSLSTSTTPTPLEVS.

Residues 1–267 (MTKFIFVTGG…AEQVLNLLQM (267 aa)) form an amidoligase domain region. CTP is bound at residue Ser-13. Ser-13 provides a ligand contact to UTP. ATP contacts are provided by residues 14-19 (SIGKGI) and Asp-71. The Mg(2+) site is built by Asp-71 and Glu-141. CTP is bound by residues 148–150 (DIE), 188–193 (KTKPTQ), and Lys-224. UTP contacts are provided by residues 188-193 (KTKPTQ) and Lys-224. The 243-residue stretch at 292 to 534 (EIAIVGKYVQ…IQAAIALSLS (243 aa)) folds into the Glutamine amidotransferase type-1 domain. Gly-354 is a binding site for L-glutamine. Cys-381 serves as the catalytic Nucleophile; for glutamine hydrolysis. Residues 382–385 (LGMQ), Glu-405, and Arg-462 each bind L-glutamine. Active-site residues include His-507 and Glu-509.

Belongs to the CTP synthase family. Homotetramer.

It catalyses the reaction UTP + L-glutamine + ATP + H2O = CTP + L-glutamate + ADP + phosphate + 2 H(+). It carries out the reaction L-glutamine + H2O = L-glutamate + NH4(+). The catalysed reaction is UTP + NH4(+) + ATP = CTP + ADP + phosphate + 2 H(+). It functions in the pathway pyrimidine metabolism; CTP biosynthesis via de novo pathway; CTP from UDP: step 2/2. Allosterically activated by GTP, when glutamine is the substrate; GTP has no effect on the reaction when ammonia is the substrate. The allosteric effector GTP functions by stabilizing the protein conformation that binds the tetrahedral intermediate(s) formed during glutamine hydrolysis. Inhibited by the product CTP, via allosteric rather than competitive inhibition. In terms of biological role, catalyzes the ATP-dependent amination of UTP to CTP with either L-glutamine or ammonia as the source of nitrogen. Regulates intracellular CTP levels through interactions with the four ribonucleotide triphosphates. The sequence is that of CTP synthase from Nostoc punctiforme (strain ATCC 29133 / PCC 73102).